The following is a 319-amino-acid chain: 1-aminocyclopropane-1-carboxylate oxidase (319 aa).

The Fe2OG dioxygenase domain occupies 152–253 (GPNFGSKVSN…RMSLASFYNP (102 aa)). His177, Asp179, and His234 together coordinate Fe cation.

Belongs to the iron/ascorbate-dependent oxidoreductase family. The cofactor is Fe cation.

The catalysed reaction is 1-aminocyclopropane-1-carboxylate + L-ascorbate + O2 = ethene + L-dehydroascorbate + hydrogen cyanide + CO2 + 2 H2O. It functions in the pathway alkene biosynthesis; ethylene biosynthesis via S-adenosyl-L-methionine; ethylene from S-adenosyl-L-methionine: step 2/2. The chain is 1-aminocyclopropane-1-carboxylate oxidase (ACO) from Nicotiana tabacum (Common tobacco).